The primary structure comprises 331 residues: Ketol-acid reductoisomerase (NADP(+)) (331 aa).

A KARI N-terminal Rossmann domain is found at 1–182; it reads MATLYYDTDA…GGTRAGILET (182 aa). NADP(+)-binding positions include 25–28, Ser51, Ser53, and 83–86; these read YGSQ and DEFQ. Residue His108 is part of the active site. Gly134 contacts NADP(+). Positions 183–328 constitute a KARI C-terminal knotted domain; the sequence is NFKEETETDL…KGLRAMFSWL (146 aa). Asp191, Glu195, Glu227, and Glu231 together coordinate Mg(2+). A substrate-binding site is contributed by Ser252.

Belongs to the ketol-acid reductoisomerase family. The cofactor is Mg(2+).

It carries out the reaction (2R)-2,3-dihydroxy-3-methylbutanoate + NADP(+) = (2S)-2-acetolactate + NADPH + H(+). The catalysed reaction is (2R,3R)-2,3-dihydroxy-3-methylpentanoate + NADP(+) = (S)-2-ethyl-2-hydroxy-3-oxobutanoate + NADPH + H(+). It functions in the pathway amino-acid biosynthesis; L-isoleucine biosynthesis; L-isoleucine from 2-oxobutanoate: step 2/4. It participates in amino-acid biosynthesis; L-valine biosynthesis; L-valine from pyruvate: step 2/4. Functionally, involved in the biosynthesis of branched-chain amino acids (BCAA). Catalyzes an alkyl-migration followed by a ketol-acid reduction of (S)-2-acetolactate (S2AL) to yield (R)-2,3-dihydroxy-isovalerate. In the isomerase reaction, S2AL is rearranged via a Mg-dependent methyl migration to produce 3-hydroxy-3-methyl-2-ketobutyrate (HMKB). In the reductase reaction, this 2-ketoacid undergoes a metal-dependent reduction by NADPH to yield (R)-2,3-dihydroxy-isovalerate. The protein is Ketol-acid reductoisomerase (NADP(+)) of Synechococcus sp. (strain RCC307).